We begin with the raw amino-acid sequence, 238 residues long: Uridylate kinase (238 aa).

ATP is bound at residue 12–15 (KLSG). UMP is bound at residue G54. Residues G55 and R59 each coordinate ATP. UMP contacts are provided by residues D74 and 135–142 (TGNPYFTT). T162, Y168, and D171 together coordinate ATP.

The protein belongs to the UMP kinase family. As to quaternary structure, homohexamer.

The protein localises to the cytoplasm. It carries out the reaction UMP + ATP = UDP + ADP. It functions in the pathway pyrimidine metabolism; CTP biosynthesis via de novo pathway; UDP from UMP (UMPK route): step 1/1. Its activity is regulated as follows. Inhibited by UTP. Functionally, catalyzes the reversible phosphorylation of UMP to UDP. The chain is Uridylate kinase from Oleidesulfovibrio alaskensis (strain ATCC BAA-1058 / DSM 17464 / G20) (Desulfovibrio alaskensis).